The sequence spans 149 residues: Large ribosomal subunit protein bL9 (149 aa).

Belongs to the bacterial ribosomal protein bL9 family.

Binds to the 23S rRNA. The chain is Large ribosomal subunit protein bL9 from Geobacillus sp. (strain WCH70).